Consider the following 290-residue polypeptide: ATP synthase subunit a (290 aa).

The next 7 helical transmembrane spans lie at 54-74 (AVHLDTLGWSLLMGAIFILLF), 115-135 (IAPLALTIFVWVFLMNSLKWI), 136-156 (PVDYIPGIAHLLGLPAFKIVP), 164-184 (FGLSLGVFILILFYSFKVKGF), 201-221 (LVPFNLFLEILGLLTKPLSLA), 233-253 (VVFILIALLPFYVQWTLNVPW), and 254-274 (AIFHILVIPLQAFIFMVLTVV).

It belongs to the ATPase A chain family. In terms of assembly, F-type ATPases have 2 components, CF(1) - the catalytic core - and CF(0) - the membrane proton channel. CF(1) has five subunits: alpha(3), beta(3), gamma(1), delta(1), epsilon(1). CF(0) has three main subunits: a(1), b(2) and c(9-12). The alpha and beta chains form an alternating ring which encloses part of the gamma chain. CF(1) is attached to CF(0) by a central stalk formed by the gamma and epsilon chains, while a peripheral stalk is formed by the delta and b chains.

The protein resides in the cell inner membrane. In terms of biological role, key component of the proton channel; it plays a direct role in the translocation of protons across the membrane. The sequence is that of ATP synthase subunit a from Stutzerimonas stutzeri (strain A1501) (Pseudomonas stutzeri).